The following is a 426-amino-acid chain: uncharacterized protein (426 aa).

This sequence belongs to the serpin family.

This is an uncharacterized protein from Methanosarcina acetivorans (strain ATCC 35395 / DSM 2834 / JCM 12185 / C2A).